A 297-amino-acid polypeptide reads, in one-letter code: MKESLPITLRPNEPMSRHTSWRVGGPAQYYAEPTTPDEAMVLAAWAMTHRLPLIWVGRGTNLLVRDEGFAGVIASYRGQRWALHEHGETAELWVEAGTPMAGTARRLAAMGWAGLEWAEGLPGAIGGAIVGNAGCYGGDTASVLIDAELLLNGSERVVWPVTELGYAYRESILKRPGADGVPPLVLAGRFRLHRADPKVLMARIGAIAAERKRKTPAGSSCGSVFKNPPGDSAGRLIEAAGLKGTRVGDAEISPIHANYIVNRGQARAADILTLIELARTTVAEQFGVMLQLEVRVI.

The region spanning 22-195 is the FAD-binding PCMH-type domain; it reads RVGGPAQYYA…LAGRFRLHRA (174 aa). Arg-169 is a catalytic residue. The active-site Proton donor is the Ser-223. Residue Glu-293 is part of the active site.

It belongs to the MurB family. FAD is required as a cofactor.

Its subcellular location is the cytoplasm. It carries out the reaction UDP-N-acetyl-alpha-D-muramate + NADP(+) = UDP-N-acetyl-3-O-(1-carboxyvinyl)-alpha-D-glucosamine + NADPH + H(+). The protein operates within cell wall biogenesis; peptidoglycan biosynthesis. Functionally, cell wall formation. This is UDP-N-acetylenolpyruvoylglucosamine reductase from Chloroflexus aggregans (strain MD-66 / DSM 9485).